We begin with the raw amino-acid sequence, 75 residues long: CDC42 small effector protein 2-B (75 aa).

Residues C10 and C11 are each lipidated (S-palmitoyl cysteine). In terms of domain architecture, CRIB spans 29-42 (IGEPMNFVHTAHVG).

Belongs to the CDC42SE/SPEC family.

It localises to the cytoplasm. It is found in the cytoskeleton. Its subcellular location is the cell membrane. Functionally, probably involved in the organization of the actin cytoskeleton by acting downstream of CDC42, inducing actin filament assembly. In Xenopus laevis (African clawed frog), this protein is CDC42 small effector protein 2-B (cdc42se2-b).